A 77-amino-acid polypeptide reads, in one-letter code: Protein ImpC (77 aa).

Belongs to the DinI family.

The chain is Protein ImpC (impC) from Salmonella typhimurium.